Consider the following 492-residue polypeptide: Cysteine--tRNA ligase (492 aa).

C29 serves as a coordination point for Zn(2+). The short motif at 31 to 41 (LTTSDPPHLGH) is the 'HIGH' region element. The Zn(2+) site is built by C229, H254, and E258. The 'KMSKS' region signature appears at 286–290 (KMSSS).

The protein belongs to the class-I aminoacyl-tRNA synthetase family. Zn(2+) serves as cofactor.

It is found in the cytoplasm. It catalyses the reaction tRNA(Cys) + L-cysteine + ATP = L-cysteinyl-tRNA(Cys) + AMP + diphosphate. This chain is Cysteine--tRNA ligase, found in Haloarcula marismortui (strain ATCC 43049 / DSM 3752 / JCM 8966 / VKM B-1809) (Halobacterium marismortui).